A 283-amino-acid polypeptide reads, in one-letter code: Phospholipase C (283 aa).

The first 24 residues, methionine 1–alanine 24, serve as a signal peptide directing secretion. Residues histidine 25–arginine 38 constitute a propeptide that is removed on maturation. Zn(2+) contacts are provided by tryptophan 39, histidine 52, aspartate 93, histidine 107, histidine 156, aspartate 160, histidine 166, histidine 180, and glutamate 184. The region spanning tryptophan 39 to arginine 283 is the Zn-dependent PLC domain.

The protein belongs to the bacterial zinc-metallophospholipase C family. As to quaternary structure, monomer. Requires Zn(2+) as cofactor.

The enzyme catalyses a 1,2-diacyl-sn-glycero-3-phosphocholine + H2O = phosphocholine + a 1,2-diacyl-sn-glycerol + H(+). Its function is as follows. Required, with sphingomyelinase, to effect target cell lysis (hemolysis). This is Phospholipase C (plc) from Bacillus cereus.